The following is a 628-amino-acid chain: Biosynthetic arginine decarboxylase (628 aa).

Lysine 99 is subject to N6-(pyridoxal phosphate)lysine. 279-289 (VDVGGGLGIDY) contributes to the substrate binding site.

It belongs to the Orn/Lys/Arg decarboxylase class-II family. SpeA subfamily. Mg(2+) serves as cofactor. The cofactor is pyridoxal 5'-phosphate.

The enzyme catalyses L-arginine + H(+) = agmatine + CO2. It participates in amine and polyamine biosynthesis; agmatine biosynthesis; agmatine from L-arginine: step 1/1. Catalyzes the biosynthesis of agmatine from arginine. The protein is Biosynthetic arginine decarboxylase of Xylella fastidiosa (strain M12).